The primary structure comprises 623 residues: Membralin-like protein At1g60995 (623 aa).

A helical transmembrane segment spans residues 24–44 (GFLEYTYLFVAITLFCILVVM). Positions 99–119 (SLEVSKTDQESSTSEENTDDT) are disordered. 4 helical membrane passes run 315 to 335 (GVLM…SFTL), 363 to 383 (IFVH…ILFF), 392 to 412 (LLAF…LISV), and 424 to 444 (FFLL…YGFS). 2 disordered regions span residues 506–567 (NRTT…QAGA) and 602–623 (EAQV…LSVD). A compositionally biased stretch (polar residues) spans 514 to 531 (PSGPNHTTPNQNTETRSF).

Belongs to the membralin family.

The protein localises to the membrane. The chain is Membralin-like protein At1g60995 from Arabidopsis thaliana (Mouse-ear cress).